Reading from the N-terminus, the 136-residue chain is Histone H3.1 (136 aa).

The tract at residues Met1–Arg41 is disordered. Lys5 bears the N6,N6,N6-trimethyllysine; alternate mark. The residue at position 5 (Lys5) is an N6,N6-dimethyllysine; alternate. Residues Lys5 and Lys10 each carry the N6-methyllysine; alternate modification. Lys10 bears the N6-acetyllysine; alternate mark. Ser11 bears the Phosphoserine mark. Lys15 is modified (N6,N6-dimethyllysine; alternate). N6-acetyllysine; alternate is present on residues Lys15, Lys19, Lys24, Lys28, and Lys37. An N6-methyllysine; alternate mark is found at Lys19, Lys24, Lys28, and Lys37. Positions Ala22–Ala33 are enriched in low complexity. N6,N6,N6-trimethyllysine; alternate occurs at positions 28 and 37. N6,N6-dimethyllysine; alternate is present on residues Lys28 and Lys37. N6-acetyllysine occurs at positions 57 and 65. Residue Lys80 is modified to N6,N6,N6-trimethyllysine; alternate. The residue at position 80 (Lys80) is an N6,N6-dimethyllysine; alternate. Lys80 bears the N6-methyllysine; alternate mark.

The protein belongs to the histone H3 family. In terms of assembly, the nucleosome is a histone octamer containing two molecules each of H2A, H2B, H3 and H4 assembled in one H3-H4 heterotetramer and two H2A-H2B heterodimers. The octamer wraps approximately 147 bp of DNA. In terms of processing, phosphorylated to form H3S10ph. H3S10ph promotes subsequent H3K14ac formation and is required for transcriptional activation through TBP recruitment to the promoters. Post-translationally, mono-, di- and trimethylated by the COMPASS complex to form H3K4me1/2/3. H3K4me activates gene expression by regulating transcription elongation and plays a role in telomere length maintenance. H3K4me enrichment correlates with transcription levels, and occurs in a 5' to 3' gradient with H3K4me3 enrichment at the 5'-end of genes, shifting to H3K4me2 and then H3K4me1. Methylated by SET2 to form H3K36me. H3K36me represses gene expression. Methylated by DOT1 to form H3K79me. H3K79me is required for association of SIR proteins with telomeric regions and for telomeric silencing. The COMPASS-mediated formation of H3K4me2/3 and the DOT1-mediated formation of H3K79me require H2BK123ub1. Acetylation of histone H3 leads to transcriptional activation. H3K14ac formation by GCN5 is promoted by H3S10ph. H3K14ac can also be formed by ESA1. H3K56ac formation occurs predominantly in newly synthesized H3 molecules during G1, S and G2/M of the cell cycle and may be involved in DNA repair.

It localises to the nucleus. Its subcellular location is the chromosome. Its function is as follows. Core component of nucleosome. Nucleosomes wrap and compact DNA into chromatin, limiting DNA accessibility to the cellular machineries which require DNA as a template. Histones thereby play a central role in transcription regulation, DNA repair, DNA replication and chromosomal stability. DNA accessibility is regulated via a complex set of post-translational modifications of histones, also called histone code, and nucleosome remodeling. The polypeptide is Histone H3.1 (HHT1) (Mycosarcoma maydis (Corn smut fungus)).